The following is a 242-amino-acid chain: Biosynthetic peptidoglycan transglycosylase (242 aa).

The helical transmembrane segment at 19–39 (ILAALAVFWGGGIALFSVVPV) threads the bilayer.

It belongs to the glycosyltransferase 51 family.

The protein localises to the cell inner membrane. The enzyme catalyses [GlcNAc-(1-&gt;4)-Mur2Ac(oyl-L-Ala-gamma-D-Glu-L-Lys-D-Ala-D-Ala)](n)-di-trans,octa-cis-undecaprenyl diphosphate + beta-D-GlcNAc-(1-&gt;4)-Mur2Ac(oyl-L-Ala-gamma-D-Glu-L-Lys-D-Ala-D-Ala)-di-trans,octa-cis-undecaprenyl diphosphate = [GlcNAc-(1-&gt;4)-Mur2Ac(oyl-L-Ala-gamma-D-Glu-L-Lys-D-Ala-D-Ala)](n+1)-di-trans,octa-cis-undecaprenyl diphosphate + di-trans,octa-cis-undecaprenyl diphosphate + H(+). It functions in the pathway cell wall biogenesis; peptidoglycan biosynthesis. Functionally, peptidoglycan polymerase that catalyzes glycan chain elongation from lipid-linked precursors. This chain is Biosynthetic peptidoglycan transglycosylase, found in Salmonella agona (strain SL483).